The sequence spans 172 residues: Adenine phosphoribosyltransferase (172 aa).

Belongs to the purine/pyrimidine phosphoribosyltransferase family. Homodimer.

The protein resides in the cytoplasm. The catalysed reaction is AMP + diphosphate = 5-phospho-alpha-D-ribose 1-diphosphate + adenine. Its pathway is purine metabolism; AMP biosynthesis via salvage pathway; AMP from adenine: step 1/1. Its function is as follows. Catalyzes a salvage reaction resulting in the formation of AMP, that is energically less costly than de novo synthesis. This Staphylococcus aureus (strain bovine RF122 / ET3-1) protein is Adenine phosphoribosyltransferase.